Consider the following 151-residue polypeptide: MKLVIQRVLQAQVYIDDNLFSAIGPGLMLLLGIHHQDNLEQILWSVDKLVHLRIFNDENGKMNRNVKECEGEILVVSQFTLYGNCLNGRRPDFIQAASPPIALSLYRQFIDELKKEAPHVKTGQFGAQMQVSLTNDGPVTFILESLDRRKA.

Positions 137–138 (GP) match the Gly-cisPro motif, important for rejection of L-amino acids motif.

It belongs to the DTD family. As to quaternary structure, homodimer.

The protein resides in the cytoplasm. It carries out the reaction glycyl-tRNA(Ala) + H2O = tRNA(Ala) + glycine + H(+). The enzyme catalyses a D-aminoacyl-tRNA + H2O = a tRNA + a D-alpha-amino acid + H(+). In terms of biological role, an aminoacyl-tRNA editing enzyme that deacylates mischarged D-aminoacyl-tRNAs. Also deacylates mischarged glycyl-tRNA(Ala), protecting cells against glycine mischarging by AlaRS. Acts via tRNA-based rather than protein-based catalysis; rejects L-amino acids rather than detecting D-amino acids in the active site. By recycling D-aminoacyl-tRNA to D-amino acids and free tRNA molecules, this enzyme counteracts the toxicity associated with the formation of D-aminoacyl-tRNA entities in vivo and helps enforce protein L-homochirality. The chain is D-aminoacyl-tRNA deacylase from Protochlamydia amoebophila (strain UWE25).